The sequence spans 929 residues: Isoleucine--tRNA ligase (929 aa).

A 'HIGH' region motif is present at residues 58–68; sequence PYANGDIHIGH. L-isoleucyl-5'-AMP is bound at residue glutamate 563. A 'KMSKS' region motif is present at residues 605–609; sequence KMSKS. Lysine 608 serves as a coordination point for ATP. Positions 892, 895, 912, and 915 each coordinate Zn(2+).

Belongs to the class-I aminoacyl-tRNA synthetase family. IleS type 1 subfamily. Monomer. It depends on Zn(2+) as a cofactor.

The protein resides in the cytoplasm. The catalysed reaction is tRNA(Ile) + L-isoleucine + ATP = L-isoleucyl-tRNA(Ile) + AMP + diphosphate. Its function is as follows. Catalyzes the attachment of isoleucine to tRNA(Ile). As IleRS can inadvertently accommodate and process structurally similar amino acids such as valine, to avoid such errors it has two additional distinct tRNA(Ile)-dependent editing activities. One activity is designated as 'pretransfer' editing and involves the hydrolysis of activated Val-AMP. The other activity is designated 'posttransfer' editing and involves deacylation of mischarged Val-tRNA(Ile). The polypeptide is Isoleucine--tRNA ligase (Neisseria meningitidis serogroup C / serotype 2a (strain ATCC 700532 / DSM 15464 / FAM18)).